The primary structure comprises 162 residues: Endoribonuclease YbeY (162 aa).

Zn(2+)-binding residues include His126, His130, and His136.

It belongs to the endoribonuclease YbeY family. The cofactor is Zn(2+).

It localises to the cytoplasm. Its function is as follows. Single strand-specific metallo-endoribonuclease involved in late-stage 70S ribosome quality control and in maturation of the 3' terminus of the 16S rRNA. In Fusobacterium nucleatum subsp. nucleatum (strain ATCC 25586 / DSM 15643 / BCRC 10681 / CIP 101130 / JCM 8532 / KCTC 2640 / LMG 13131 / VPI 4355), this protein is Endoribonuclease YbeY.